The sequence spans 435 residues: Citrate synthase (435 aa).

Active-site residues include H311 and D370.

This sequence belongs to the citrate synthase family. In terms of assembly, homohexamer.

The catalysed reaction is oxaloacetate + acetyl-CoA + H2O = citrate + CoA + H(+). It functions in the pathway carbohydrate metabolism; tricarboxylic acid cycle; isocitrate from oxaloacetate: step 1/2. The polypeptide is Citrate synthase (gltA) (Rickettsia africae (strain ESF-5)).